A 359-amino-acid polypeptide reads, in one-letter code: N-acetylneuraminate-9-phosphate synthase (359 aa).

N6-acetyllysine occurs at positions 61, 74, and 79. Position 275 is a phosphoserine (Ser275). Lys290 carries the post-translational modification N6-acetyllysine. The AFP-like domain maps to 294-353; that stretch reads SVVAKVKIPEGTILTMDMLTVKVGEPKGYPPEDIFNLVGKKVLVTVEEDDTIMEELVDNH.

As to expression, ubiquitous.

The catalysed reaction is aldehydo-N-acetyl-D-mannosamine 6-phosphate + phosphoenolpyruvate + H2O = N-acetylneuraminate 9-phosphate + phosphate. It carries out the reaction aldehydo-D-mannose 6-phosphate + phosphoenolpyruvate + H2O = 3-deoxy-D-glycero-beta-D-galacto-non-2-ulopyranosonate 9-phosphate + phosphate. Functionally, catalyzes the condensation of phosphoenolpyruvate (PEP) and N-acetylmannosamine 6-phosphate (ManNAc-6-P) to synthesize N-acetylneuraminate-9-phosphate (Neu5Ac-9-P). Also catalyzes the condensation of PEP and D-mannose 6-phosphate (Man-6-P) to produce 3-deoxy-D-glycero-beta-D-galacto-non-2-ulopyranosonate 9-phosphate (KDN-9-P). Neu5Ac-9-P and KDN-9-P are the phosphorylated forms of sialic acids N-acetylneuraminic acid (Neu5Ac) and deaminoneuraminic acid (KDN), respectively. Required for brain and skeletal development. This Homo sapiens (Human) protein is N-acetylneuraminate-9-phosphate synthase.